A 671-amino-acid chain; its full sequence is Autophagy-related protein 22-2 (671 aa).

Composition is skewed to polar residues over residues 1–10 (MVPRNFSESQ) and 19–34 (PSNS…SSSF). The segment at 1–67 (MVPRNFSESQ…RDVPAQYAGE (67 aa)) is disordered. Asparagine 5 and asparagine 21 each carry an N-linked (GlcNAc...) asparagine glycan. The span at 39-60 (ERSSSADHDSMGPDIGSAHRDV) shows a compositional bias: basic and acidic residues. Helical transmembrane passes span 83–103 (YGFA…PITL), 155–175 (SFAM…VVSI), 188–208 (LLLF…TVVP), and 212–232 (LLGA…FVLL). The interval 251–271 (PDFSPEFRPSSVDESPPEHSL) is disordered. The chain crosses the membrane as a helical span at residues 324–344 (IGIGYSAGLFLQCVSIVIIWL). Asparagine 346 carries N-linked (GlcNAc...) asparagine glycosylation. A run of 7 helical transmembrane segments spans residues 354-374 (LVLF…ALWL), 422-442 (FFLA…GTAV), 457-477 (GLIN…WAAI), 491-511 (ACIC…LPIV), 523-543 (WEMY…SSYC), 560-582 (YALY…GAIV), and 591-611 (AFWF…FVNV). The segment at 634-671 (ESAGEGSRGSSIDHESGQNEGLIYPRVGENAGRGRNDI) is disordered.

It belongs to the ATG22 family.

The protein resides in the vacuole membrane. Functionally, vacuolar effluxer which mediate the efflux of amino acids resulting from autophagic degradation. The release of autophagic amino acids allows the maintenance of protein synthesis and viability during nitrogen starvation. The sequence is that of Autophagy-related protein 22-2 (atg22-2) from Sclerotinia sclerotiorum (strain ATCC 18683 / 1980 / Ss-1) (White mold).